A 306-amino-acid polypeptide reads, in one-letter code: Homeobox protein Hox-C13a (306 aa).

Residues 68–90 form a disordered region; sequence SVYSDISSPDTGRQCPAPQTSSS. Positions 236-295 form a DNA-binding region, homeobox; that stretch reads GRKKRVPYTKLQLKELEKEYAASKFITKDKRRRISAATNLSERQVTIWFQNRRVKEKKFI.

Belongs to the Abd-B homeobox family.

The protein resides in the nucleus. Its function is as follows. Sequence-specific transcription factor which is part of a developmental regulatory system that provides cells with specific positional identities on the anterior-posterior axis. The polypeptide is Homeobox protein Hox-C13a (hoxc13a) (Takifugu rubripes (Japanese pufferfish)).